A 124-amino-acid polypeptide reads, in one-letter code: Large-conductance mechanosensitive channel (124 aa).

The next 3 membrane-spanning stretches (helical) occupy residues 14–34, 37–57, and 67–87; these read VIDL…VQSL, NLIN…NLVF, and GSFI…FLIV.

This sequence belongs to the MscL family. As to quaternary structure, homopentamer.

It is found in the cell membrane. Its function is as follows. Channel that opens in response to stretch forces in the membrane lipid bilayer. May participate in the regulation of osmotic pressure changes within the cell. The protein is Large-conductance mechanosensitive channel of Lactobacillus acidophilus (strain ATCC 700396 / NCK56 / N2 / NCFM).